A 358-amino-acid chain; its full sequence is Nicotinate-nucleotide--dimethylbenzimidazole phosphoribosyltransferase (358 aa).

The active-site Proton acceptor is Glu313.

It belongs to the CobT family.

The enzyme catalyses 5,6-dimethylbenzimidazole + nicotinate beta-D-ribonucleotide = alpha-ribazole 5'-phosphate + nicotinate + H(+). It functions in the pathway nucleoside biosynthesis; alpha-ribazole biosynthesis; alpha-ribazole from 5,6-dimethylbenzimidazole: step 1/2. Catalyzes the synthesis of alpha-ribazole-5'-phosphate from nicotinate mononucleotide (NAMN) and 5,6-dimethylbenzimidazole (DMB). The polypeptide is Nicotinate-nucleotide--dimethylbenzimidazole phosphoribosyltransferase (Corynebacterium glutamicum (strain ATCC 13032 / DSM 20300 / JCM 1318 / BCRC 11384 / CCUG 27702 / LMG 3730 / NBRC 12168 / NCIMB 10025 / NRRL B-2784 / 534)).